The chain runs to 360 residues: MPPTAVTEATAVPGSNVTTKDPAKDTILTPRFYTTDFEAMAAMDLRPNEAELEAICEEFRKDYNRHHFVRNGEFDGAADQLDPETRKVFVEFLEQSCTSEFSGFLLYKELSRRIKTKNPLLAECFSHMARDEARHAGFLNKSMSDFGLQLDLGFLTSSKSYTFFKPKFIFYATYLSEKIGYWRYITIFRHLEQNPDSKIFPIFNFFENWCQDENRHGDFFDALMKAQPETVRGLRARLWCRFFLLAVFATMYVRDVARKEFYEALGLDAREYDRLVIDKTNENTARVFPVVLDVKNPRFYNGLERLVNNNAALSAVDATQAPAPIKLLRKLPHWVANGAQMASLFLMAPIRSDRYHPSVR.

Residues 1–21 form a disordered region; the sequence is MPPTAVTEATAVPGSNVTTKD.

Belongs to the AcsF family. Fe cation is required as a cofactor.

It catalyses the reaction Mg-protoporphyrin IX 13-monomethyl ester + 3 NADPH + 3 O2 + 2 H(+) = 3,8-divinyl protochlorophyllide a + 3 NADP(+) + 5 H2O. The protein operates within porphyrin-containing compound metabolism; chlorophyll biosynthesis (light-independent). Functionally, catalyzes the formation of the isocyclic ring in chlorophyll biosynthesis. Mediates the cyclase reaction, which results in the formation of divinylprotochlorophyllide (Pchlide) characteristic of all chlorophylls from magnesium-protoporphyrin IX 13-monomethyl ester (MgPMME). This is Magnesium-protoporphyrin IX monomethyl ester [oxidative] cyclase from Synechococcus sp. (strain CC9311).